The sequence spans 161 residues: Allophycocyanin alpha chain 1 (161 aa).

Position 71 is an N4-methylasparagine (asparagine 71). Cysteine 81 is a binding site for (2R,3E)-phycocyanobilin.

Belongs to the phycobiliprotein family. In terms of assembly, component of the phycobilisome. Heterodimer of an alpha and a beta chain. In terms of processing, contains one covalently linked bilin chromophore.

Its subcellular location is the cellular thylakoid membrane. Light-harvesting photosynthetic bile pigment-protein from the phycobiliprotein complex. Allophycocyanin has a maximum absorption at approximately 650 nanometers. This is Allophycocyanin alpha chain 1 from Microchaete diplosiphon (Fremyella diplosiphon).